The following is a 258-amino-acid chain: Peroxisomal membrane protein 11B (258 aa).

K43 is modified (N6-acetyllysine). The segment at 210–258 is interaction with PEX19, PEX11G and FIS1 and peroxisome targeting; that stretch reads VVRNACDLFIPLDKLGLWRCGPGIVGLCGLVSSILSILTLICPWLRLKP. A helical transmembrane segment spans residues 232–254; sequence GIVGLCGLVSSILSILTLICPWL.

The protein belongs to the peroxin-11 family. In terms of assembly, homodimer. Heterodimer with PEX11G. Interacts with PEX19. Interacts with FIS1.

The protein localises to the peroxisome membrane. Functionally, involved in peroxisomal proliferation. May regulate peroxisome division by recruiting the dynamin-related GTPase DNM1L to the peroxisomal membrane. Promotes membrane protrusion and elongation on the peroxisomal surface. In Bos taurus (Bovine), this protein is Peroxisomal membrane protein 11B (PEX11B).